A 361-amino-acid chain; its full sequence is DNA polymerase IV 3 (361 aa).

Positions 12–192 (IIHVDMDAFY…LPVNKFHGVG (181 aa)) constitute a UmuC domain. The Mg(2+) site is built by aspartate 16 and aspartate 110. The active site involves glutamate 111.

Belongs to the DNA polymerase type-Y family. As to quaternary structure, monomer. Mg(2+) serves as cofactor.

The protein resides in the cytoplasm. The catalysed reaction is DNA(n) + a 2'-deoxyribonucleoside 5'-triphosphate = DNA(n+1) + diphosphate. Poorly processive, error-prone DNA polymerase involved in untargeted mutagenesis. Copies undamaged DNA at stalled replication forks, which arise in vivo from mismatched or misaligned primer ends. These misaligned primers can be extended by PolIV. Exhibits no 3'-5' exonuclease (proofreading) activity. May be involved in translesional synthesis, in conjunction with the beta clamp from PolIII. This is DNA polymerase IV 3 (dinB3) from Mesorhizobium japonicum (strain LMG 29417 / CECT 9101 / MAFF 303099) (Mesorhizobium loti (strain MAFF 303099)).